The primary structure comprises 281 residues: Octanoyl-[GcvH]:protein N-octanoyltransferase (281 aa).

The region spanning 44-250 is the BPL/LPL catalytic domain; the sequence is GESAATMRSW…TLQQFAPKLT (207 aa). The active-site Acyl-thioester intermediate is Cys149.

Belongs to the octanoyltransferase LipL family.

The enzyme catalyses N(6)-octanoyl-L-lysyl-[glycine-cleavage complex H protein] + L-lysyl-[lipoyl-carrier protein] = N(6)-octanoyl-L-lysyl-[lipoyl-carrier protein] + L-lysyl-[glycine-cleavage complex H protein]. Its pathway is protein modification; protein lipoylation via endogenous pathway; protein N(6)-(lipoyl)lysine from octanoyl-[acyl-carrier-protein]. In terms of biological role, catalyzes the amidotransfer (transamidation) of the octanoyl moiety from octanoyl-GcvH to the lipoyl domain of the E2 subunit of lipoate-dependent enzymes. The polypeptide is Octanoyl-[GcvH]:protein N-octanoyltransferase (Bacillus anthracis).